A 460-amino-acid chain; its full sequence is tRNA modification GTPase MnmE (460 aa).

Residues Arg-25, Glu-87, and Arg-126 each contribute to the (6S)-5-formyl-5,6,7,8-tetrahydrofolate site. The TrmE-type G domain occupies 221-381 (GLKVAIVGRP…LETAIANLVQ (161 aa)). Position 231 (Asn-231) interacts with K(+). Residues 231-236 (NVGKSS), 250-256 (TDLPGTT), and 275-278 (DTAG) contribute to the GTP site. Ser-235 is a binding site for Mg(2+). Thr-250, Leu-252, and Thr-255 together coordinate K(+). Position 256 (Thr-256) interacts with Mg(2+). Lys-460 contributes to the (6S)-5-formyl-5,6,7,8-tetrahydrofolate binding site.

The protein belongs to the TRAFAC class TrmE-Era-EngA-EngB-Septin-like GTPase superfamily. TrmE GTPase family. Homodimer. Heterotetramer of two MnmE and two MnmG subunits. It depends on K(+) as a cofactor.

The protein localises to the cytoplasm. In terms of biological role, exhibits a very high intrinsic GTPase hydrolysis rate. Involved in the addition of a carboxymethylaminomethyl (cmnm) group at the wobble position (U34) of certain tRNAs, forming tRNA-cmnm(5)s(2)U34. In Picosynechococcus sp. (strain ATCC 27264 / PCC 7002 / PR-6) (Agmenellum quadruplicatum), this protein is tRNA modification GTPase MnmE.